Consider the following 538-residue polypeptide: Nicotinate phosphoribosyltransferase (538 aa).

2 residues coordinate nicotinate: Tyr21 and Thr210. Position 213 is a phosphohistidine (His213). Arg318 lines the nicotinate pocket. Thr380 provides a ligand contact to 5-phospho-alpha-D-ribose 1-diphosphate. Ser537 is modified (phosphoserine).

This sequence belongs to the NAPRTase family. Homodimer. Mg(2+) serves as cofactor. The cofactor is Mn(2+). Post-translationally, transiently phosphorylated on a His residue during the reaction cycle. Phosphorylation strongly increases the affinity for substrates and increases the rate of nicotinate D-ribonucleotide production. Dephosphorylation regenerates the low-affinity form of the enzyme, leading to product release.

The protein localises to the cytoplasm. Its subcellular location is the cytosol. The catalysed reaction is nicotinate + 5-phospho-alpha-D-ribose 1-diphosphate + ATP + H2O = nicotinate beta-D-ribonucleotide + ADP + phosphate + diphosphate. It participates in cofactor biosynthesis; NAD(+) biosynthesis; nicotinate D-ribonucleotide from nicotinate: step 1/1. In terms of biological role, catalyzes the first step in the biosynthesis of NAD from nicotinic acid, the ATP-dependent synthesis of beta-nicotinate D-ribonucleotide from nicotinate and 5-phospho-D-ribose 1-phosphate. Helps prevent cellular oxidative stress via its role in NAD biosynthesis. The sequence is that of Nicotinate phosphoribosyltransferase (NAPRT) from Homo sapiens (Human).